Reading from the N-terminus, the 229-residue chain is Cytochrome c oxidase subunit 2 (229 aa).

Topologically, residues 1 to 26 (MSTWANLGLQDSASPLMEQLIFFHDH) are mitochondrial intermembrane. Residues 27–48 (ALLILVMITVLVGYLMVMLFFN) traverse the membrane as a helical segment. The Mitochondrial matrix segment spans residues 49 to 62 (SYVNRFLLHGQLIE). The helical transmembrane segment at 63–82 (MIWTILPAIILLFIAMPSLR) threads the bilayer. The Mitochondrial intermembrane segment spans residues 83–229 (LLYLLDEINE…IKWISDKVNS (147 aa)). Cu cation contacts are provided by His161, Cys196, Glu198, Cys200, His204, and Met207. Glu198 lines the Mg(2+) pocket.

Belongs to the cytochrome c oxidase subunit 2 family. In terms of assembly, component of the cytochrome c oxidase (complex IV, CIV), a multisubunit enzyme composed of a catalytic core of 3 subunits and several supernumerary subunits. The complex exists as a monomer or a dimer and forms supercomplexes (SCs) in the inner mitochondrial membrane with ubiquinol-cytochrome c oxidoreductase (cytochrome b-c1 complex, complex III, CIII). Requires Cu cation as cofactor.

The protein localises to the mitochondrion inner membrane. It carries out the reaction 4 Fe(II)-[cytochrome c] + O2 + 8 H(+)(in) = 4 Fe(III)-[cytochrome c] + 2 H2O + 4 H(+)(out). Its function is as follows. Component of the cytochrome c oxidase, the last enzyme in the mitochondrial electron transport chain which drives oxidative phosphorylation. The respiratory chain contains 3 multisubunit complexes succinate dehydrogenase (complex II, CII), ubiquinol-cytochrome c oxidoreductase (cytochrome b-c1 complex, complex III, CIII) and cytochrome c oxidase (complex IV, CIV), that cooperate to transfer electrons derived from NADH and succinate to molecular oxygen, creating an electrochemical gradient over the inner membrane that drives transmembrane transport and the ATP synthase. Cytochrome c oxidase is the component of the respiratory chain that catalyzes the reduction of oxygen to water. Electrons originating from reduced cytochrome c in the intermembrane space (IMS) are transferred via the dinuclear copper A center (CU(A)) of subunit 2 and heme A of subunit 1 to the active site in subunit 1, a binuclear center (BNC) formed by heme A3 and copper B (CU(B)). The BNC reduces molecular oxygen to 2 water molecules using 4 electrons from cytochrome c in the IMS and 4 protons from the mitochondrial matrix. In Drosophila subobscura (Fruit fly), this protein is Cytochrome c oxidase subunit 2 (mt:CoII).